Here is a 364-residue protein sequence, read N- to C-terminus: CCA-adding enzyme (364 aa).

2 residues coordinate ATP: glycine 19 and arginine 22. CTP is bound by residues glycine 19 and arginine 22. Residues aspartate 32 and aspartate 34 each coordinate Mg(2+). Arginine 102, arginine 148, and arginine 151 together coordinate ATP. 3 residues coordinate CTP: arginine 102, arginine 148, and arginine 151.

It belongs to the tRNA nucleotidyltransferase/poly(A) polymerase family. Bacterial CCA-adding enzyme type 2 subfamily. The cofactor is Mg(2+).

The catalysed reaction is a tRNA precursor + 2 CTP + ATP = a tRNA with a 3' CCA end + 3 diphosphate. It catalyses the reaction a tRNA with a 3' CCA end + 2 CTP + ATP = a tRNA with a 3' CCACCA end + 3 diphosphate. Functionally, catalyzes the addition and repair of the essential 3'-terminal CCA sequence in tRNAs without using a nucleic acid template. Adds these three nucleotides in the order of C, C, and A to the tRNA nucleotide-73, using CTP and ATP as substrates and producing inorganic pyrophosphate. tRNA 3'-terminal CCA addition is required both for tRNA processing and repair. Also involved in tRNA surveillance by mediating tandem CCA addition to generate a CCACCA at the 3' terminus of unstable tRNAs. While stable tRNAs receive only 3'-terminal CCA, unstable tRNAs are marked with CCACCA and rapidly degraded. The polypeptide is CCA-adding enzyme (Bordetella pertussis (strain Tohama I / ATCC BAA-589 / NCTC 13251)).